The following is an 81-amino-acid chain: Cytotoxin 1 (81 aa).

The signal sequence occupies residues 1-21 (MKTLLLTLVVVTIVCLDLGYT). 4 cysteine pairs are disulfide-bonded: Cys24-Cys42, Cys35-Cys59, Cys63-Cys74, and Cys75-Cys80.

It belongs to the three-finger toxin family. Short-chain subfamily. Type IA cytotoxin sub-subfamily. As to quaternary structure, monomer in solution; homodimer and oligomer in the presence of negatively charged lipids forming a pore with a size ranging between 20 and 30 Angstroms. As to expression, expressed by the venom gland.

It localises to the secreted. Its subcellular location is the target cell membrane. Its function is as follows. Shows cytolytic activity on many different cells by forming pores in lipid membranes. Exhibits concentration-dependent growth inhibitory effects in the lung cell lines A549 (IC(50)= 0.88) and NL20 (IC(50)= 1.91), in the prostate cell lines PC-3 (IC(50)= 3.13 ug/ml) and RWPE-1 (IC(50)=0.35 ug/ml), and in the breast cell lines MCF-7 (IC(50)= 9.10 ug/ml) and 184B5 (IC(50)=6.21 ug/ml), with high selectivity for the lung cancer cell line A549 (selectivity index=2.17). Induces primarily necrosis in the A549 lung cancer cell line, and mainly caspase-independent late apoptosis in the breast cancer cells line MCF-7 and in the prostate cancer cell line PC-3. The polypeptide is Cytotoxin 1 (Naja sumatrana (Equatorial spitting cobra)).